A 254-amino-acid polypeptide reads, in one-letter code: Putative epimerase LsrE (254 aa).

A helical membrane pass occupies residues 14–34 (VALLASYPLSVGILAGQWIAL). Positions 50, 52, and 81 each coordinate a divalent metal cation. The Proton acceptor role is filled by Asp52. Substrate contacts are provided by residues His81, 166–169 (GYGS), 199–201 (DGS), and 221–222 (GS). Asp199 is an a divalent metal cation binding site. Asp199 acts as the Proton donor in catalysis.

The protein belongs to the ribulose-phosphate 3-epimerase family. Requires a divalent metal cation as cofactor.

The protein localises to the cell membrane. The sequence is that of Putative epimerase LsrE (lsrE) from Salmonella typhi.